The sequence spans 162 residues: uncharacterized protein (162 aa).

The HTH asnC-type domain maps to 6–99 (LDDLDRAILK…YVTKTLSGFP (94 aa)). The segment at residues 25–44 (IAEISNQLKKPESTVHFRIK) is a DNA-binding region (H-T-H motif).

This is an uncharacterized protein from Pyrococcus horikoshii (strain ATCC 700860 / DSM 12428 / JCM 9974 / NBRC 100139 / OT-3).